Here is an 859-residue protein sequence, read N- to C-terminus: Cadherin-related family member 1 (859 aa).

The N-terminal stretch at 1-21 (MRRGPQVALVLGLLCIYLAQA) is a signal peptide. Over 22–701 (NFAPHFFDNG…LIQTKDNPMK (680 aa)) the chain is Extracellular. Cadherin domains lie at 36–135 (NGNM…APRF), 136–247 (LQEP…APIF), 248–354 (VGTP…PPTF), 360–473 (PQNK…VPKF), 474–577 (TSHY…YPQF), and 569–691 (DVND…MAAF). Residues Asn-58 and Asn-89 are each glycosylated (N-linked (GlcNAc...) asparagine). Asn-288 and Asn-297 each carry an N-linked (GlcNAc...) asparagine glycan. The chain crosses the membrane as a helical span at residues 702 to 722 (AVGVLAGVMAIVVAITVLIST). The Cytoplasmic segment spans residues 723–859 (ATFWRNKKSN…KKSLGNKAYV (137 aa)). The tract at residues 789 to 859 (PPRAPALPPP…KKSLGNKAYV (71 aa)) is disordered. Positions 790–800 (PRAPALPPPPK) are enriched in pro residues. Residues 802–816 (ASSTVAQQTVPTVSG) are compositionally biased toward polar residues. A compositionally biased stretch (low complexity) spans 817–827 (SLTPQPSQQLP).

As to quaternary structure, interacts with PROM1. Undergoes proteolytic cleavage; produces a soluble 95 kDa N-terminal fragment and a 25 kDa cell-associated C-terminal fragment. Expressed in the retina. Strongly expressed by the mitral and tufted cells in the main and accessory olfactory bulbs. Also expressed in the septum and olfactory cortex. Weakly expressed in the triangular septal nucleus and piriform cortex.

It is found in the cell membrane. Its function is as follows. Potential calcium-dependent cell-adhesion protein. May be required for the structural integrity of the outer segment (OS) of photoreceptor cells. The polypeptide is Cadherin-related family member 1 (Cdhr1) (Rattus norvegicus (Rat)).